We begin with the raw amino-acid sequence, 404 residues long: Pleckstrin homology domain-containing family A member 1 (404 aa).

PH domains lie at 7–112 (QNRI…KAIK) and 191–289 (AVIK…GAIV). 2 disordered regions span residues 291-332 (QRGP…RSNS) and 355-404 (NFKV…VSDV). A compositionally biased stretch (low complexity) spans 316-332 (TNAATATSHSTASRSNS). Residues Ser-332 and Ser-362 each carry the phosphoserine modification.

Interacts with MPDZ and PTPN13. Highly expressed in skeletal muscle, thymus, pancreas, placenta and lung. Detected at low levels in brain, heart, peripheral blood leukocytes, testis, ovary, spinal cord, thyroid, kidney, liver, small intestine and colon.

It localises to the cytoplasm. The protein localises to the cell membrane. Its subcellular location is the nucleus. Its function is as follows. Binds specifically to phosphatidylinositol 3,4-diphosphate (PtdIns3,4P2), but not to other phosphoinositides. May recruit other proteins to the plasma membrane. The polypeptide is Pleckstrin homology domain-containing family A member 1 (PLEKHA1) (Homo sapiens (Human)).